Consider the following 323-residue polypeptide: Acetyl esterase (323 aa).

An Involved in the stabilization of the negatively charged intermediate by the formation of the oxyanion hole motif is present at residues 91-93; sequence HGG. Residues Ser-165, Asp-262, and His-292 contribute to the active site.

Belongs to the 'GDXG' lipolytic enzyme family. Homodimer. Interacts with MalT and MelA.

The protein resides in the cytoplasm. Its function is as follows. Displays esterase activity towards short chain fatty esters (acyl chain length of up to 8 carbons). Able to hydrolyze triacetylglycerol (triacetin) and tributyrylglycerol (tributyrin), but not trioleylglycerol (triolein) or cholesterol oleate. Negatively regulates MalT activity by antagonizing maltotriose binding. Inhibits MelA galactosidase activity. This Salmonella typhi protein is Acetyl esterase.